Reading from the N-terminus, the 213-residue chain is Glycerol-3-phosphate acyltransferase (213 aa).

6 helical membrane-spanning segments follow: residues 3-23 (ILLL…LWIG), 55-75 (ITFL…IWLG), 80-100 (SPLI…FTGF), 110-130 (AGVL…VFAL), 142-162 (SITA…IHFL), and 163-183 (LDGY…VIIF).

The protein belongs to the PlsY family. As to quaternary structure, probably interacts with PlsX.

The protein localises to the cell membrane. The enzyme catalyses an acyl phosphate + sn-glycerol 3-phosphate = a 1-acyl-sn-glycero-3-phosphate + phosphate. The protein operates within lipid metabolism; phospholipid metabolism. Catalyzes the transfer of an acyl group from acyl-phosphate (acyl-PO(4)) to glycerol-3-phosphate (G3P) to form lysophosphatidic acid (LPA). This enzyme utilizes acyl-phosphate as fatty acyl donor, but not acyl-CoA or acyl-ACP. In Streptococcus thermophilus (strain CNRZ 1066), this protein is Glycerol-3-phosphate acyltransferase.